The sequence spans 715 residues: Phosphoribosylformylglycinamidine synthase subunit PurL (715 aa).

Residue His33 is part of the active site. Tyr36 contacts ATP. Glu77 serves as a coordination point for Mg(2+). Residues Ser78–His81 and Arg100 contribute to the substrate site. The active-site Proton acceptor is His79. Asp101 is a binding site for Mg(2+). Position 225 (Gln225) interacts with substrate. Asp253 is a Mg(2+) binding site. Substrate is bound at residue Glu297–Gln299. Asn476 and Gly513 together coordinate ATP. Asn514 serves as a coordination point for Mg(2+). Ser516 provides a ligand contact to substrate.

Belongs to the FGAMS family. As to quaternary structure, monomer. Part of the FGAM synthase complex composed of 1 PurL, 1 PurQ and 2 PurS subunits.

Its subcellular location is the cytoplasm. It carries out the reaction N(2)-formyl-N(1)-(5-phospho-beta-D-ribosyl)glycinamide + L-glutamine + ATP + H2O = 2-formamido-N(1)-(5-O-phospho-beta-D-ribosyl)acetamidine + L-glutamate + ADP + phosphate + H(+). Its pathway is purine metabolism; IMP biosynthesis via de novo pathway; 5-amino-1-(5-phospho-D-ribosyl)imidazole from N(2)-formyl-N(1)-(5-phospho-D-ribosyl)glycinamide: step 1/2. Its function is as follows. Part of the phosphoribosylformylglycinamidine synthase complex involved in the purines biosynthetic pathway. Catalyzes the ATP-dependent conversion of formylglycinamide ribonucleotide (FGAR) and glutamine to yield formylglycinamidine ribonucleotide (FGAM) and glutamate. The FGAM synthase complex is composed of three subunits. PurQ produces an ammonia molecule by converting glutamine to glutamate. PurL transfers the ammonia molecule to FGAR to form FGAM in an ATP-dependent manner. PurS interacts with PurQ and PurL and is thought to assist in the transfer of the ammonia molecule from PurQ to PurL. This Methanosarcina barkeri (strain Fusaro / DSM 804) protein is Phosphoribosylformylglycinamidine synthase subunit PurL.